Here is a 100-residue protein sequence, read N- to C-terminus: Small ribosomal subunit protein uS14 (100 aa).

It belongs to the universal ribosomal protein uS14 family. In terms of assembly, part of the 30S ribosomal subunit. Contacts proteins S3 and S10.

Functionally, binds 16S rRNA, required for the assembly of 30S particles and may also be responsible for determining the conformation of the 16S rRNA at the A site. The polypeptide is Small ribosomal subunit protein uS14 (Parasynechococcus marenigrum (strain WH8102)).